The sequence spans 406 residues: uncharacterized protein (406 aa).

It to S.pombe SpAC12C2.04.

The protein localises to the cytoplasm. It is found in the nucleus. This is an uncharacterized protein from Schizosaccharomyces pombe (strain 972 / ATCC 24843) (Fission yeast).